A 335-amino-acid chain; its full sequence is Probable cytosolic iron-sulfur protein assembly protein Ciao1 (335 aa).

WD repeat units follow at residues 12 to 51 (GHKG…WSTK), 57 to 96 (GHKR…FECN), 101 to 140 (GHEN…EFEC), 146 to 185 (SHTQ…NDWD), 192 to 231 (SHTS…NSAG), 250 to 289 (QHSR…KPDE), and 301 to 335 (AHDQ…KVTE).

It belongs to the WD repeat CIA1 family.

Functionally, essential component of the cytosolic iron-sulfur (Fe/S) protein assembly machinery. Required for the maturation of extramitochondrial Fe/S proteins. This is Probable cytosolic iron-sulfur protein assembly protein Ciao1 from Drosophila erecta (Fruit fly).